Here is a 300-residue protein sequence, read N- to C-terminus: Recombination-associated protein RdgC (300 aa).

Belongs to the RdgC family.

The protein localises to the cytoplasm. Its subcellular location is the nucleoid. May be involved in recombination. The chain is Recombination-associated protein RdgC from Herminiimonas arsenicoxydans.